Consider the following 336-residue polypeptide: Holliday junction branch migration complex subunit RuvB (336 aa).

The large ATPase domain (RuvB-L) stretch occupies residues A4–Y184. ATP contacts are provided by residues I23, R24, G65, K68, T69, T70, E131–Y133, R174, Y184, and R221. T69 serves as a coordination point for Mg(2+). Residues Q185 to N255 form a small ATPAse domain (RuvB-S) region. The tract at residues A258 to P336 is head domain (RuvB-H). Residues R294, R313, and R318 each contribute to the DNA site.

It belongs to the RuvB family. As to quaternary structure, homohexamer. Forms an RuvA(8)-RuvB(12)-Holliday junction (HJ) complex. HJ DNA is sandwiched between 2 RuvA tetramers; dsDNA enters through RuvA and exits via RuvB. An RuvB hexamer assembles on each DNA strand where it exits the tetramer. Each RuvB hexamer is contacted by two RuvA subunits (via domain III) on 2 adjacent RuvB subunits; this complex drives branch migration. In the full resolvosome a probable DNA-RuvA(4)-RuvB(12)-RuvC(2) complex forms which resolves the HJ.

It localises to the cytoplasm. It catalyses the reaction ATP + H2O = ADP + phosphate + H(+). Its function is as follows. The RuvA-RuvB-RuvC complex processes Holliday junction (HJ) DNA during genetic recombination and DNA repair, while the RuvA-RuvB complex plays an important role in the rescue of blocked DNA replication forks via replication fork reversal (RFR). RuvA specifically binds to HJ cruciform DNA, conferring on it an open structure. The RuvB hexamer acts as an ATP-dependent pump, pulling dsDNA into and through the RuvAB complex. RuvB forms 2 homohexamers on either side of HJ DNA bound by 1 or 2 RuvA tetramers; 4 subunits per hexamer contact DNA at a time. Coordinated motions by a converter formed by DNA-disengaged RuvB subunits stimulates ATP hydrolysis and nucleotide exchange. Immobilization of the converter enables RuvB to convert the ATP-contained energy into a lever motion, pulling 2 nucleotides of DNA out of the RuvA tetramer per ATP hydrolyzed, thus driving DNA branch migration. The RuvB motors rotate together with the DNA substrate, which together with the progressing nucleotide cycle form the mechanistic basis for DNA recombination by continuous HJ branch migration. Branch migration allows RuvC to scan DNA until it finds its consensus sequence, where it cleaves and resolves cruciform DNA. The chain is Holliday junction branch migration complex subunit RuvB from Salmonella agona (strain SL483).